Reading from the N-terminus, the 569-residue chain is Intraflagellar transport protein 74/72 (569 aa).

Coiled coils occupy residues 75–156, 201–231, and 271–298; these read ITAT…TRNE, YRSLNDENITLKQKESELRKELQEAAAVAAN, and AITLHRQIRAAKRELDAYKAKIKAAESH.

It belongs to the IFT74 family.

The protein localises to the cell projection. It localises to the cilium. The protein resides in the flagellum. Its subcellular location is the cytoplasm. It is found in the cytoskeleton. The protein localises to the flagellum axoneme. It localises to the flagellum basal body. Component of the intraflagellar transport complex B (IFT-B) involved in flagellar assembly. The sequence is that of Intraflagellar transport protein 74/72 from Giardia intestinalis (strain ATCC 50803 / WB clone C6) (Giardia lamblia).